The following is a 437-amino-acid chain: Adenylosuccinate synthetase (437 aa).

Residues 25–31 (GDEGKGK), 53–55 (GHT), and Lys62 contribute to the GTP site. The active-site Proton acceptor is Asp26. Asp26 and Gly53 together coordinate Mg(2+). Residues 26–29 (DEGK) and 51–54 (NAGH) each bind IMP. Catalysis depends on His54, which acts as the Proton donor. IMP-binding residues include Thr141, Arg155, Asn232, and Thr247. Position 307 (Thr307) interacts with GTP. 307-313 (TTTKRPR) contacts substrate. Residue Arg311 coordinates IMP. Residues Arg313, 339-341 (KLD), and 425-427 (GIG) each bind GTP.

It belongs to the adenylosuccinate synthetase family. Homodimer. The cofactor is Mg(2+).

The protein localises to the cytoplasm. The enzyme catalyses IMP + L-aspartate + GTP = N(6)-(1,2-dicarboxyethyl)-AMP + GDP + phosphate + 2 H(+). It functions in the pathway purine metabolism; AMP biosynthesis via de novo pathway; AMP from IMP: step 1/2. In terms of biological role, plays an important role in the salvage pathway for purine nucleotide biosynthesis. Catalyzes the first committed step in the biosynthesis of AMP from IMP. In Plasmodium vivax (strain Salvador I), this protein is Adenylosuccinate synthetase.